Consider the following 201-residue polypeptide: Recombination protein RecR (201 aa).

A C4-type zinc finger spans residues 60-75; that stretch reads CSECGNMDVSDPCTVC. A Toprim domain is found at 83–178; that stretch reads AAICVVETVG…SITSLARGVP (96 aa).

The protein belongs to the RecR family.

May play a role in DNA repair. It seems to be involved in an RecBC-independent recombinational process of DNA repair. It may act with RecF and RecO. The protein is Recombination protein RecR of Maricaulis maris (strain MCS10) (Caulobacter maris).